The sequence spans 191 residues: LOB domain-containing protein 19 (191 aa).

In terms of domain architecture, LOB spans Gly15–Leu117.

Belongs to the LOB domain-containing protein family. As to expression, expressed in shoots, roots and floral tissues, but not in stems or leaves.

In Arabidopsis thaliana (Mouse-ear cress), this protein is LOB domain-containing protein 19 (LBD19).